A 443-amino-acid chain; its full sequence is EGF-containing fibulin-like extracellular matrix protein 2 (443 aa).

An N-terminal signal peptide occupies residues 1 to 23; the sequence is MLPCASCLPGSLLLWALLLLLLG. Positions 36-81 constitute an EGF-like 1; atypical domain; the sequence is YTECTDGYEWDPDSQHCRDVNECLTIPEACKGEMKCINHYGGYLCL. Intrachain disulfides connect C58–C121, C65–C80, C71–C109, C127–C140, C134–C149, C151–C162, C168–C177, C173–C186, C188–C201, C207–C217, C213–C226, C228–C241, C247–C258, C254–C267, C269–C281, C287–C300, C294–C309, and C315–C327. Residues 123–163 form the EGF-like 2; calcium-binding domain; the sequence is DVDECAQALHDCRPSQDCHNLPGSYQCTCPDGYRKIGPECV. One can recognise an EGF-like 3; calcium-binding domain in the interval 164–202; the sequence is DIDECRYRYCQHRCVNLPGSFRCQCEPGFQLGPNNRSCV. N198 is a glycosylation site (N-linked (GlcNAc...) asparagine). Positions 203-242 constitute an EGF-like 4; calcium-binding domain; it reads DVNECDMGAPCEQRCFNSYGTFLCRCHQGYELHRDGFSCS. The EGF-like 5; calcium-binding domain occupies 243–282; it reads DIDECSYSSYLCQYRCINEPGRFSCHCPQGYQLLATRLCQ. The EGF-like 6; calcium-binding domain occupies 283-328; that stretch reads DIDECESGAHQCSEAQTCVNFHGGYRCVDTNRCVEPYIQVSENRCL. The N-linked (GlcNAc...) asparagine glycan is linked to N394.

This sequence belongs to the fibulin family. Homodimer; disulfide-linked. Multimer; allows heparin binding. Monomer. Interacts with FBN1 (via N-terminal domain); this interaction inhibits EFEMP2 binding to LOX and ELN. Interacts with LOX (via propeptide); this interaction is strong and facilitates formation of ternary complexes with ELN during elastic fiber assembly; this interaction limits interaction of EFEMP2 with FBLN5. Interacts with PITX2. Interacts with ELN with moderate affinity; this interaction regulates ELN self-assembly maturation stage. Interacts with FBLN5 with moderate affinity. Interacts with LOXL1 (via propeptide), LTBP1 and TGFB1 stronger than with LOXL2 and LTBP3. Interacts with PCOLCE. Interacts with collagen type IV trimer (COL4A1-COL4A1-COL4A2), NID2 and moderately with COL15A1-derived endostatin. Interacts with EMILIN1; this interaction promotes the incorporation of EFEMP2 into the extracellular matrix. Interacts with LTBP4; the LTBP4 long form (LTBP4L) has a stronger binding affinity than the LTBP4 short form and the LTBP4 long form promotes fibrillar deposition of EFEMP2. In terms of processing, N-glycosylated; contains mostly complex-type glycans. Not O-glycosylated. Post-translationally, cleaved by ELANE; produces a 50-55 kDa fragment. Cleaved by MMP2 and MMP9; produces several fragments.

The protein resides in the secreted. It is found in the extracellular space. Its subcellular location is the extracellular matrix. The protein localises to the basement membrane. Plays a crucial role in elastic fiber formation in tissue, and in the formation of ultrastructural connections between elastic laminae and smooth muscle cells in the aorta, therefore participates in terminal differentiation and maturation of smooth muscle cell (SMC) and in the mechanical properties and wall integrity maintenance of the aorta. In addition, is involved in the control of collagen fibril assembly in tissue throught proteolytic activation of LOX leading to cross- linking of collagen and elastin. Also promotes ELN coacervation and participates in the deposition of ELN coacervates on to microfibrils but also regulates ELN cross- linking through LOX interaction. Moreover adheres to the cells through heparin binding in a calcium-dependent manner and regulates vascularlar smooth muscle cells proliferation through angiotensin signaling. The chain is EGF-containing fibulin-like extracellular matrix protein 2 from Homo sapiens (Human).